The following is a 320-amino-acid chain: MQTRNAFSYIKEEITRSISVLLVIYIIIRAPISNAYPIFAQQGYENPREATGRIVCANCHLANKPVDIEVPQTVLPDTVFEAVVRIPYDMQVKQVLANGKRGALNVGAVLILPEGFELAPTDRISPEIKEKMGNLSFQSYRPTKKNILVVGPVPGQKYSEITFPILSPDPATNRDVNFLKYPIYVGGNRGRGQIYPDGSKSNNNVYNATTSGIINKIIRKDKGGYEITIVDASDGREVIDIIPPGPELLVSEGESIKLDQPLTSNPNVGGFGQGDAEIVLQDPLRVQGLLFFLASIIFAQIFLVLKKKQFEKVQLSEMNF.

The N-terminal stretch at 1–35 (MQTRNAFSYIKEEITRSISVLLVIYIIIRAPISNA) is a signal peptide. Heme is bound by residues Y36, C56, C59, and H60. A helical membrane pass occupies residues 286–305 (VQGLLFFLASIIFAQIFLVL).

The protein belongs to the cytochrome f family. As to quaternary structure, the 4 large subunits of the cytochrome b6-f complex are cytochrome b6, subunit IV (17 kDa polypeptide, petD), cytochrome f and the Rieske protein, while the 4 small subunits are PetG, PetL, PetM and PetN. The complex functions as a dimer. Heme serves as cofactor.

The protein localises to the plastid. It is found in the chloroplast thylakoid membrane. In terms of biological role, component of the cytochrome b6-f complex, which mediates electron transfer between photosystem II (PSII) and photosystem I (PSI), cyclic electron flow around PSI, and state transitions. The sequence is that of Cytochrome f from Lotus japonicus (Lotus corniculatus var. japonicus).